Consider the following 707-residue polypeptide: Elongation factor G (707 aa).

The tr-type G domain maps to 8–290 (ERYRNIGICA…AVIEYLPSPT (283 aa)). GTP-binding positions include 17 to 24 (AHVDAGKT), 88 to 92 (DTPGH), and 142 to 145 (NKMD).

Belongs to the TRAFAC class translation factor GTPase superfamily. Classic translation factor GTPase family. EF-G/EF-2 subfamily.

Its subcellular location is the cytoplasm. Its function is as follows. Catalyzes the GTP-dependent ribosomal translocation step during translation elongation. During this step, the ribosome changes from the pre-translocational (PRE) to the post-translocational (POST) state as the newly formed A-site-bound peptidyl-tRNA and P-site-bound deacylated tRNA move to the P and E sites, respectively. Catalyzes the coordinated movement of the two tRNA molecules, the mRNA and conformational changes in the ribosome. In Idiomarina loihiensis (strain ATCC BAA-735 / DSM 15497 / L2-TR), this protein is Elongation factor G.